The following is a 394-amino-acid chain: Acetyl-CoA acetyltransferase (394 aa).

The active-site Acyl-thioester intermediate is Cys89. Active-site proton acceptor residues include His350 and Cys380.

It belongs to the thiolase-like superfamily. Thiolase family. As to quaternary structure, homotetramer.

The protein resides in the cytoplasm. The catalysed reaction is 2 acetyl-CoA = acetoacetyl-CoA + CoA. The protein operates within biopolymer metabolism; poly-(R)-3-hydroxybutanoate biosynthesis. It participates in metabolic intermediate biosynthesis; (R)-mevalonate biosynthesis; (R)-mevalonate from acetyl-CoA: step 1/3. This is Acetyl-CoA acetyltransferase from Allochromatium vinosum (strain ATCC 17899 / DSM 180 / NBRC 103801 / NCIMB 10441 / D) (Chromatium vinosum).